A 59-amino-acid polypeptide reads, in one-letter code: Cecropin-C type 1 (59 aa).

The N-terminal stretch at 1–23 (MNFTKIFVLIAMAALLLVGQSEA) is a signal peptide.

The protein localises to the secreted. Its function is as follows. Cecropins have lytic and antibacterial activity against several Gram-positive and Gram-negative bacteria. The protein is Cecropin-C type 1 (CECC1) of Aedes albopictus (Asian tiger mosquito).